The chain runs to 508 residues: Photosystem II CP47 reaction center protein (508 aa).

The next 6 membrane-spanning stretches (helical) occupy residues 21–36 (AVHI…WAGS), 101–115 (IVFS…IWHW), 140–156 (GIHL…FGAF), 203–218 (IAAG…FHLS), 237–252 (VLSS…AFVV), and 457–472 (SFAL…HGAR).

Belongs to the PsbB/PsbC family. PsbB subfamily. In terms of assembly, PSII is composed of 1 copy each of membrane proteins PsbA, PsbB, PsbC, PsbD, PsbE, PsbF, PsbH, PsbI, PsbJ, PsbK, PsbL, PsbM, PsbT, PsbX, PsbY, PsbZ, Psb30/Ycf12, at least 3 peripheral proteins of the oxygen-evolving complex and a large number of cofactors. It forms dimeric complexes. Binds multiple chlorophylls. PSII binds additional chlorophylls, carotenoids and specific lipids. is required as a cofactor.

Its subcellular location is the plastid. The protein resides in the chloroplast thylakoid membrane. In terms of biological role, one of the components of the core complex of photosystem II (PSII). It binds chlorophyll and helps catalyze the primary light-induced photochemical processes of PSII. PSII is a light-driven water:plastoquinone oxidoreductase, using light energy to abstract electrons from H(2)O, generating O(2) and a proton gradient subsequently used for ATP formation. This Buxus microphylla (Littleleaf boxwood) protein is Photosystem II CP47 reaction center protein.